The chain runs to 623 residues: Aspartate--tRNA(Asp/Asn) ligase (623 aa).

An L-aspartate-binding site is contributed by Glu-175. Residues 199-202 (QQYK) are aspartate. L-aspartate contacts are provided by Arg-221 and His-483. 221-223 (RDE) contacts ATP. Glu-517 is an ATP binding site. An L-aspartate-binding site is contributed by Arg-524. 569–572 (GVDR) is an ATP binding site.

This sequence belongs to the class-II aminoacyl-tRNA synthetase family. Type 1 subfamily. As to quaternary structure, homodimer.

Its subcellular location is the cytoplasm. The enzyme catalyses tRNA(Asx) + L-aspartate + ATP = L-aspartyl-tRNA(Asx) + AMP + diphosphate. In terms of biological role, aspartyl-tRNA synthetase with relaxed tRNA specificity since it is able to aspartylate not only its cognate tRNA(Asp) but also tRNA(Asn). Reaction proceeds in two steps: L-aspartate is first activated by ATP to form Asp-AMP and then transferred to the acceptor end of tRNA(Asp/Asn). This is Aspartate--tRNA(Asp/Asn) ligase from Xanthobacter autotrophicus (strain ATCC BAA-1158 / Py2).